We begin with the raw amino-acid sequence, 664 residues long: DCC-interacting protein 13-beta (664 aa).

A required for RAB5A binding region spans residues 1–428; the sequence is MPAVDKLLLE…NSEMENENDK (428 aa). Residues 3–268 form the BAR domain; the sequence is AVDKLLLEEA…ESVYTPDSDV (266 aa). The PH domain maps to 277–375; sequence LIQKAGYLNL…WICAINNISR (99 aa). Positions 488 to 637 constitute a PID domain; sequence SLLQQMFIVR…LMLSIPLTND (150 aa). Residues 643–664 form a disordered region; that stretch reads LNDQPDDDDGNPNEHRGAESEA. Residues 654 to 664 are compositionally biased toward basic and acidic residues; the sequence is PNEHRGAESEA.

Homodimer. Homotetramer. Binds RAB5A/Rab5 through an N-terminal domain. This interaction is essential for its recruitment to endosomal membranes as well as its role in cell proliferation. Binds subunits of the NuRD/MeCP1 complex. Interacts with FSHR; interaction is independent of follicle stimulating hormone stimulation. Interacts with APPL1; the interaction is decreased by adiponectin in a time-dependent manner. Forms a complex comprising APPL1, RUVBL2, CTNNB1, HDAC1 and HDAC2; interaction reduces interaction between CTNNB1, HDAC1, HDAC2 and RUVBL2 leading to the decrease of deacetylase activity of this complex; affects the recruitment of repressive complexes to the Wnt target genes. Interacts (via BAR domain) with TBC1D1; interaction is dependent of TBC1D1 phosphorylation at 'Ser-235'; interaction diminishes the phosphorylation of TBC1D1 at 'Thr-596', resulting in inhibition of SLC2A4 translocation and glucose uptake. Interacts with ANXA2; targets APPL2 to endosomes and acting in parallel to RAB5A. Interacts with RAB31 (in GTP-bound form); interaction contributes to or enhances recruitment of APPL2 to the phagosomes; interaction enhances Fc-gamma receptor-mediated phagocytosis through PI3K/Akt signaling in macrophages. Interacts with PIK3R1; forms a complex with PIK3R1 and APPL1. Interacts (via BAR domain) with ADIPOR1; hinders the accessibility of APPL1 to ADIPOR1; negatively regulates adiponectin signaling; ADIPOQ dissociates this interaction and facilitates the recruitment of APPL1 to ADIPOR1. Interacts (via BAR domain) with ADIPOR2; ADIPOQ dissociates this interaction. As to expression, high levels in brain, heart, kidney and skeletal muscle.

Its subcellular location is the early endosome membrane. The protein resides in the nucleus. It localises to the cell membrane. It is found in the endosome membrane. The protein localises to the cytoplasm. Its subcellular location is the cytoplasmic vesicle. The protein resides in the phagosome. It localises to the cell projection. It is found in the ruffle. The protein localises to the ruffle membrane. Its subcellular location is the phagosome membrane. Multifunctional adapter protein that binds to various membrane receptors, nuclear factors and signaling proteins to regulate many processes, such as cell proliferation, immune response, endosomal trafficking and cell metabolism. Regulates signaling pathway leading to cell proliferation through interaction with RAB5A and subunits of the NuRD/MeCP1 complex. Plays a role in immune response by modulating phagocytosis, inflammatory and innate immune responses. In macrophages, enhances Fc-gamma receptor-mediated phagocytosis through interaction with RAB31 leading to activation of PI3K/Akt signaling. In response to LPS, modulates inflammatory responses by playing a key role on the regulation of TLR4 signaling and in the nuclear translocation of RELA/NF-kappa-B p65 and the secretion of pro- and anti-inflammatory cytokines. Also functions as a negative regulator of innate immune response via inhibition of AKT1 signaling pathway by forming a complex with APPL1 and PIK3R1. Plays a role in endosomal trafficking of TGFBR1 from the endosomes to the nucleus. Plays a role in cell metabolism by regulating adiponecting ans insulin signaling pathways and adaptative thermogenesis. In muscle, negatively regulates adiponectin-simulated glucose uptake and fatty acid oxidation by inhibiting adiponectin signaling pathway through APPL1 sequestration thereby antagonizing APPL1 action. In muscles, negatively regulates insulin-induced plasma membrane recruitment of GLUT4 and glucose uptake through interaction with TBC1D1. Plays a role in cold and diet-induced adaptive thermogenesis by activating ventromedial hypothalamus (VMH) neurons throught AMPK inhibition which enhances sympathetic outflow to subcutaneous white adipose tissue (sWAT), sWAT beiging and cold tolerance. Also plays a role in other signaling pathways namely Wnt/beta-catenin, HGF and glucocorticoid receptor signaling. Positive regulator of beta-catenin/TCF-dependent transcription through direct interaction with RUVBL2/reptin resulting in the relief of RUVBL2-mediated repression of beta-catenin/TCF target genes by modulating the interactions within the beta-catenin-reptin-HDAC complex. May affect adult neurogenesis in hippocampus and olfactory system via regulating the sensitivity of glucocorticoid receptor. Required for fibroblast migration through HGF cell signaling. This is DCC-interacting protein 13-beta from Homo sapiens (Human).